A 265-amino-acid chain; its full sequence is Type-1Ba cytolytic delta-endotoxin (265 aa).

Belongs to the cyt1/cyt2 endotoxin family. Post-translationally, active after proteolytic processing.

Its function is as follows. Kills the larvae of dipteran insects by making pores in the epithelial cell membrane of the insect midgut. This is Type-1Ba cytolytic delta-endotoxin (cyt1Ba1) from Bacillus thuringiensis subsp. neoleoensis.